We begin with the raw amino-acid sequence, 446 residues long: Argininosuccinate synthase (446 aa).

ATP contacts are provided by residues 17–25 and Ala43; that span reads AFSGGLDTS. Tyr99 is an L-citrulline binding site. Gly129 and Thr131 together coordinate ATP. Residues Thr131, Asn135, and Asp136 each contribute to the L-aspartate site. Asn135 serves as a coordination point for L-citrulline. Asp136 provides a ligand contact to ATP. The L-citrulline site is built by Arg139 and Ser192. Asp194 lines the ATP pocket. 3 residues coordinate L-citrulline: Thr201, Glu203, and Glu280.

The protein belongs to the argininosuccinate synthase family. Type 2 subfamily. Homotetramer.

The protein localises to the cytoplasm. It catalyses the reaction L-citrulline + L-aspartate + ATP = 2-(N(omega)-L-arginino)succinate + AMP + diphosphate + H(+). The protein operates within amino-acid biosynthesis; L-arginine biosynthesis; L-arginine from L-ornithine and carbamoyl phosphate: step 2/3. In Burkholderia thailandensis (strain ATCC 700388 / DSM 13276 / CCUG 48851 / CIP 106301 / E264), this protein is Argininosuccinate synthase.